Here is a 152-residue protein sequence, read N- to C-terminus: Mediator of RNA polymerase II transcription subunit 31 (152 aa).

Basic and acidic residues predominate over residues 126 to 144; it reads DLHVESEEDREKNNEEQAE. Positions 126-152 are disordered; the sequence is DLHVESEEDREKNNEEQAEKGSNGATS.

The protein belongs to the Mediator complex subunit 31 family. In terms of assembly, component of the Mediator complex.

Its subcellular location is the nucleus. Functionally, component of the Mediator complex, a coactivator involved in the regulated transcription of nearly all RNA polymerase II-dependent genes. Mediator functions as a bridge to convey information from gene-specific regulatory proteins to the basal RNA polymerase II transcription machinery. Mediator is recruited to promoters by direct interactions with regulatory proteins and serves as a scaffold for the assembly of a functional preinitiation complex with RNA polymerase II and the general transcription factors. The sequence is that of Mediator of RNA polymerase II transcription subunit 31 (SOH1) from Coccidioides immitis (strain RS) (Valley fever fungus).